The following is a 220-amino-acid chain: pH-response regulator palI/RIM9 homolog 1 (220 aa).

The Cytoplasmic portion of the chain corresponds to methionine 1–lysine 5. Residues isoleucine 6 to valine 26 form a helical membrane-spanning segment. Topologically, residues proline 27–leucine 89 are extracellular. The helical transmembrane segment at leucine 90 to isoleucine 110 threads the bilayer. The Cytoplasmic segment spans residues cysteine 111–valine 121. A helical membrane pass occupies residues leucine 122–isoleucine 142. The Extracellular portion of the chain corresponds to aspartate 143–serine 155. The helical transmembrane segment at tryptophan 156 to isoleucine 176 threads the bilayer. Residues arginine 177–leucine 220 are Cytoplasmic-facing.

Belongs to the palI/RIM9 family.

The protein localises to the cell membrane. Functionally, required for the proteolytic cleavage of the transcription factor RIM101 in response to alkaline ambient pH. The polypeptide is pH-response regulator palI/RIM9 homolog 1 (Kluyveromyces lactis (strain ATCC 8585 / CBS 2359 / DSM 70799 / NBRC 1267 / NRRL Y-1140 / WM37) (Yeast)).